The sequence spans 988 residues: RecQ-like DNA helicase blm-1 (988 aa).

The segment at 46–119 (CEEREEEYID…QFPSRPQKRL (74 aa)) is disordered. Tandem repeats lie at residues 121–129 (DPPIVDLDE) and 130–138 (EPPIVDLDD). The segment at 121 to 138 (DPPIVDLDEEPPIVDLDD) is 2 X 9 AA tandem repeats of [DE]-P-P-I-V-D-L-D-[ED]. Positions 148–185 (TSEEVVSGDIAPEEEEEEGHDSFDDFESVPAQPPSKNT) are disordered. Residues 158 to 174 (APEEEEEEGHDSFDDFE) show a composition bias toward acidic residues. Residues 248–252 (FRHRQ) and 272–276 (GAGKS) contribute to the ATP site. One can recognise a Helicase ATP-binding domain in the interval 256-433 (ILSTLMGHDT…RDHLKMQNSK (178 aa)). The DEAH box signature appears at 375–378 (DEAH). A Helicase C-terminal domain is found at 458 to 603 (NVVEKMKQLY…VRSMHLNNVL (146 aa)). Residues 478-480 (SRK) form a 3' overhang DNA-binding region. Arg-562 contributes to the ATP binding site. The 3' overhang DNA-binding stretch occupies residues 580–583 (RLRR). Positions 615, 633, 640, and 643 each coordinate Zn(2+). 3 3' overhang DNA-binding regions span residues 676–678 (TLK), 687–691 (ALIKK), and 736–742 (YSVPNQA). Residues 807 to 888 (GDVFTRCLQD…ATYWKQVDER (82 aa)) form the HRDC domain. The tract at residues 930 to 988 (GGGGCRGRGKKRAFSGFSSGRATKKPRATAPSARGKTSGRGGAKPATSLKRNMYPATSM) is disordered. Residues 939 to 955 (KKRAFSGFSSGRATKKP) carry the Nuclear localization signal motif.

This sequence belongs to the helicase family. RecQ subfamily. In terms of assembly, monomer. Homodimer (via N-terminus). Homotetramer (via N-terminus); dimer of dimers. Homohexamer (via N-terminus). Self-association negatively regulates DNA unwinding amplitude and rate. Oligomer forms dissociate into monomer in presence of ATP. Component of the BTR double Holliday Junction dissolution complex composed of at least him-6, top-3, rmh-1 and rmif-2, which is involved in double strand break repair in the germline. May interact with rmh-1; the interaction is required for mutual stability and localization at nuclear foci. Forms a complex composed of cdc-48.1, him-6 and crp-1; within the complex, interacts with cdc-48.1. It depends on Zn(2+) as a cofactor.

It is found in the nucleus. The protein resides in the chromosome. It carries out the reaction Couples ATP hydrolysis with the unwinding of duplex DNA by translocating in the 3'-5' direction.. The enzyme catalyses ATP + H2O = ADP + phosphate + H(+). Functionally, component of the BTR double Holliday Junction dissolution complex, which is involved in homologous recombination during meiotic double strand break in the germline. Stabilizes and positively regulates the localization of the BTR double Holliday Junction dissolution complex component rmh-1 at nuclear foci during meiotic recombination. Participates in DNA replication and repair. Exhibits a magnesium-dependent ATP-dependent DNA-helicase activity that unwinds single- and double-stranded DNA in a 3'-5' direction. Negatively regulates sister chromatid exchange (SCE). ATP-dependent DNA helicase that unwinds single- and double-stranded DNA in a 3'-5' direction. Participates in DNA replication and repair. Negatively regulates sister chromatid exchange (SCE). Stimulates DNA 4-way junction branch migration and DNA Holliday junction dissolution. Binds single-stranded DNA (ssDNA), forked duplex DNA and DNA Holliday junction. The protein is RecQ-like DNA helicase blm-1 of Caenorhabditis elegans.